The sequence spans 191 residues: Protein YceI (191 aa).

The signal sequence occupies residues methionine 1 to alanine 22.

Belongs to the UPF0312 family. Type 1 subfamily.

It localises to the periplasm. This chain is Protein YceI, found in Salmonella newport (strain SL254).